The following is a 423-amino-acid chain: Hemoglobinase (423 aa).

A signal peptide spans 1–18 (MFYSIFFIHILRIVLVDC). The propeptide occupies 19–29 (NEYSEENVDDR). Active-site residues include His145 and Cys186. The disordered stretch occupies residues 286 to 307 (RKKASTEHDEPPMKPKDSIPSR). Residues 286-423 (RKKASTEHDE…INGVIRKVCG (138 aa)) constitute a propeptide that is removed on maturation. A compositionally biased stretch (basic and acidic residues) spans 289–305 (ASTEHDEPPMKPKDSIP).

The protein belongs to the peptidase C13 family. In terms of tissue distribution, gut.

It catalyses the reaction Hydrolysis of proteins and small molecule substrates at -Asn-|-Xaa- bonds.. Its function is as follows. This protease is used by the parasite for degradation of the host globin. This is Hemoglobinase (HAEM) from Schistosoma japonicum (Blood fluke).